Consider the following 354-residue polypeptide: Homeobox-leucine zipper protein HOX27 (354 aa).

Residues S98–K175 are disordered. Over residues Q148–E157 the composition is skewed to gly residues. Positions S171–Q230 form a DNA-binding region, homeobox. Positions K229 to P273 are leucine-zipper. The disordered stretch occupies residues S294–R323.

Belongs to the HD-ZIP homeobox family. Class II subfamily. As to expression, expressed in seedlings, roots, stems, leaf sheaths and blades and panicles.

The protein resides in the nucleus. In terms of biological role, probable transcription factor. This Oryza sativa subsp. japonica (Rice) protein is Homeobox-leucine zipper protein HOX27 (HOX27).